A 509-amino-acid chain; its full sequence is AAA ATPase forming ring-shaped complexes (509 aa).

The stretch at 11–50 (AHLQRTISNLSARNAKLAELLKASRDKLSILQDQLEDLAA) forms a coiled coil. 236 to 241 (GCGKTL) is a binding site for ATP.

It belongs to the AAA ATPase family. As to quaternary structure, homohexamer. Assembles into a hexameric ring structure.

The chain is AAA ATPase forming ring-shaped complexes from Corynebacterium diphtheriae (strain ATCC 700971 / NCTC 13129 / Biotype gravis).